Reading from the N-terminus, the 171-residue chain is Squamosa promoter-binding protein 2 (171 aa).

2 disordered regions span residues 20 to 46 (GDEGSDFEEEEEGEDEEEEEQERVVKV) and 57 to 76 (KLNLGEGSGGKSGEKHTASG). A compositionally biased stretch (acidic residues) spans 22 to 40 (EGSDFEEEEEGEDEEEEEQ). The SBP-type zinc-finger motif lies at 82-159 (QPCCLVENCG…AGHNERRRKS (78 aa)). Zn(2+) contacts are provided by Cys-85, Cys-90, Cys-107, His-110, Cys-126, Cys-129, His-133, and Cys-145. Positions 142–158 (KRSCRRRLAGHNERRRK) match the Bipartite nuclear localization signal motif. Residues 149-158 (LAGHNERRRK) show a composition bias toward basic residues. Positions 149–171 (LAGHNERRRKSSLESHKEGRSPR) are disordered. Over residues 159–171 (SSLESHKEGRSPR) the composition is skewed to basic and acidic residues.

The protein localises to the nucleus. In terms of biological role, probable transcriptional factor. Binds to the promoter of the SQUAMOSA gene. The chain is Squamosa promoter-binding protein 2 (SBP2) from Antirrhinum majus (Garden snapdragon).